Here is a 213-residue protein sequence, read N- to C-terminus: Orotate phosphoribosyltransferase (213 aa).

Lysine 26 provides a ligand contact to 5-phospho-alpha-D-ribose 1-diphosphate. Orotate is bound at residue 34–35 (FF). 5-phospho-alpha-D-ribose 1-diphosphate contacts are provided by residues 72–73 (YK), arginine 99, lysine 100, lysine 103, histidine 105, and 124–132 (DDVITAGTA). Orotate is bound by residues threonine 128 and arginine 156.

The protein belongs to the purine/pyrimidine phosphoribosyltransferase family. PyrE subfamily. Homodimer. The cofactor is Mg(2+).

It carries out the reaction orotidine 5'-phosphate + diphosphate = orotate + 5-phospho-alpha-D-ribose 1-diphosphate. It participates in pyrimidine metabolism; UMP biosynthesis via de novo pathway; UMP from orotate: step 1/2. Its function is as follows. Catalyzes the transfer of a ribosyl phosphate group from 5-phosphoribose 1-diphosphate to orotate, leading to the formation of orotidine monophosphate (OMP). The protein is Orotate phosphoribosyltransferase of Shigella flexneri serotype 5b (strain 8401).